The sequence spans 181 residues: MGNCLQRTTRWQLDMQETPWNLRLSAKGRTCRYFRGWSCCHSVEGCSCLPWKNIRTFKARQESPKQNEGMTSAPVQDNANETYTEELCYILVDHEAVRGRPSVNPAEGFYENISNKAERHKESSRGTETEYSVLRFPSPPQPLPSTDDEYELLMPSRFSSHAFQQPRPLTTPYETHFSYPQ.

The residue at position 102 (Ser-102) is a Phosphoserine. A compositionally biased stretch (basic and acidic residues) spans 117-128 (AERHKESSRGTE). A disordered region spans residues 117–181 (AERHKESSRG…PYETHFSYPQ (65 aa)). Tyr-150 bears the Phosphotyrosine mark.

As to quaternary structure, interacts with ACTB and MYH2; the interaction with MYH2 is increased by IL6-induced phosphorylation. Interacts (via C-terminus) with ARHGEF11 (via DH domain). Interacts with ARHGEF12. Interacts with SYK; the interaction increases after B-cell receptor stimulation, resulting in enhanced SYK autophosphorylation and activity. Phosphorylation on tyrosine residues can be induced by IL6. Phosphorylation is mediated by LYN. Post-translationally, targeted by the ubiquitin E3 ligase subunit FBXO10 to mediate its ubiquitination and degradation. Highly expressed in normal germinal center (GC) B-cells. Expressed in spleen and, to a lesser extent, bone marrow.

The protein resides in the cytoplasm. The protein localises to the cell membrane. Functionally, involved in the negative regulation of lymphocyte motility. It mediates the migration-inhibitory effects of IL6. Serves as a positive regulator of the RhoA signaling pathway. Enhancement of RhoA activation results in inhibition of lymphocyte and lymphoma cell motility by activation of its downstream effector ROCK. Is a regulator of B-cell receptor signaling, that acts through SYK kinase activation. The polypeptide is Germinal center-associated signaling and motility protein (Gcsam) (Mus musculus (Mouse)).